Here is a 220-residue protein sequence, read N- to C-terminus: Iron-sulfur cluster repair protein YtfE (220 aa).

Belongs to the RIC family. YtfE subfamily. Homodimer.

The protein resides in the cytoplasm. Di-iron-containing protein involved in the repair of iron-sulfur clusters damaged by oxidative and nitrosative stress conditions. In Escherichia coli O157:H7, this protein is Iron-sulfur cluster repair protein YtfE.